We begin with the raw amino-acid sequence, 263 residues long: Chymotrypsinogen B2 (263 aa).

The N-terminal stretch at 1 to 18 is a signal peptide; that stretch reads MAFLWLLSCWALLGTTFG. 5 cysteine pairs are disulfide-bonded: cysteine 19/cysteine 140, cysteine 60/cysteine 76, cysteine 154/cysteine 219, cysteine 186/cysteine 200, and cysteine 209/cysteine 238. The Peptidase S1 domain maps to 34-261; that stretch reads IVNGEDAVPG…LIPWVQKILA (228 aa). Active-site charge relay system residues include histidine 75 and aspartate 120. Residue serine 213 is the Charge relay system of the active site.

The protein belongs to the peptidase S1 family.

It localises to the secreted. The protein localises to the extracellular space. It catalyses the reaction Preferential cleavage: Tyr-|-Xaa, Trp-|-Xaa, Phe-|-Xaa, Leu-|-Xaa.. The chain is Chymotrypsinogen B2 (CTRB2) from Homo sapiens (Human).